We begin with the raw amino-acid sequence, 70 residues long: uncharacterized protein (70 aa).

This is an uncharacterized protein from Schizosaccharomyces pombe (strain 972 / ATCC 24843) (Fission yeast).